Reading from the N-terminus, the 120-residue chain is Large ribosomal subunit protein uL22 (120 aa).

The tract at residues 1–25 (MFVNKKYTAKGKNLPSSPKKVRPIA) is disordered.

It belongs to the universal ribosomal protein uL22 family. Part of the 50S ribosomal subunit.

Functionally, this protein binds specifically to 23S rRNA; its binding is stimulated by other ribosomal proteins, e.g. L4, L17, and L20. It is important during the early stages of 50S assembly. It makes multiple contacts with different domains of the 23S rRNA in the assembled 50S subunit and ribosome. Its function is as follows. The globular domain of the protein is located near the polypeptide exit tunnel on the outside of the subunit, while an extended beta-hairpin is found that lines the wall of the exit tunnel in the center of the 70S ribosome. This Borrelia duttonii (strain Ly) protein is Large ribosomal subunit protein uL22.